We begin with the raw amino-acid sequence, 141 residues long: MEQTLSIIKPDSVGKAHIGEIIAIFEKSGLRIAAMKMVHLSVKEAEGFYVVHKERPFFQELVDFMISGPVVVMVLQGENAVDRNRELMGATNPKEAAEGSIRALFGESIGVNAVHGSDSLENAAIEVSYFFAKTEIVNSVA.

ATP contacts are provided by Lys9, Phe57, Arg85, Thr91, Arg102, and Asn112. Catalysis depends on His115, which acts as the Pros-phosphohistidine intermediate.

Belongs to the NDK family. In terms of assembly, homotetramer. Mg(2+) serves as cofactor.

It localises to the cytoplasm. It carries out the reaction a 2'-deoxyribonucleoside 5'-diphosphate + ATP = a 2'-deoxyribonucleoside 5'-triphosphate + ADP. It catalyses the reaction a ribonucleoside 5'-diphosphate + ATP = a ribonucleoside 5'-triphosphate + ADP. In terms of biological role, major role in the synthesis of nucleoside triphosphates other than ATP. The ATP gamma phosphate is transferred to the NDP beta phosphate via a ping-pong mechanism, using a phosphorylated active-site intermediate. This chain is Nucleoside diphosphate kinase, found in Chlamydia trachomatis serovar D (strain ATCC VR-885 / DSM 19411 / UW-3/Cx).